The sequence spans 259 residues: MRDRRGPLGTCLAQVQQAGGGDSDKLSCSLKKRMPEGPWPADAPSWMNKPVVDGNSQSEALSLEMRKDPSGAGLWLHSGGPVLPYVRESVRRNPASAATPSTAVGLFPAPTECFARVSCSGVEALGRRDWLGGGPRATDGHRGQCPKGEPRVSRLPRHQKVPEMGSFQDDPPSAFPKGLGSELEPACLHSILSATLHVYPEVLLSEETKRIFLDRLKPMFSKQTIEFKKMLKSTSDGLQITLGLLALQPFELANTLCHS.

Disordered regions lie at residues 1–44 and 131–154; these read MRDR…ADAP and LGGG…RVSR. Basic and acidic residues predominate over residues 138 to 152; the sequence is TDGHRGQCPKGEPRV.

As to quaternary structure, interacts with transcriptional activator STAT3; the interaction occurs in both the nucleus and the cytoplasm, is enhanced by IL6 and promotes STAT3 dephosphorylation, leading to negative regulation of STAT3 transcriptional activator activity. Can interact with both unphosphorylated and phosphorylated STAT3 but interacts preferentially with phosphorylated STAT3 in the nucleus. Interacts with protein phosphatase PTPN2/TC45; this promotes interaction of PTPN2 with STAT3, leading to dephosphorylation of STAT3 by PTPN2.

It is found in the nucleus. The protein localises to the cytoplasm. The protein resides in the cytoplasmic vesicle. Its subcellular location is the secretory vesicle. It localises to the acrosome. Functionally, promotes dephosphorylation of transcriptional activator STAT3 by interacting with both STAT3 and protein phosphatase PTPN2. This promotes interaction of PTPN2 with STAT3 and mediates STAT3 dephosphorylation by PTPN2, leading to negative regulation of STAT3 transcriptional activator activity. May be required for spermiogenesis or sperm function. In Homo sapiens (Human), this protein is Protein FAM220A.